The sequence spans 327 residues: tRNA dimethylallyltransferase (327 aa).

14–21 (GPTASGKT) is a binding site for ATP. Position 16–21 (16–21 (TASGKT)) interacts with substrate. Interaction with substrate tRNA stretches follow at residues 39-42 (DSAL) and 163-167 (QRIQR).

Belongs to the IPP transferase family. In terms of assembly, monomer. Mg(2+) serves as cofactor.

It catalyses the reaction adenosine(37) in tRNA + dimethylallyl diphosphate = N(6)-dimethylallyladenosine(37) in tRNA + diphosphate. Its function is as follows. Catalyzes the transfer of a dimethylallyl group onto the adenine at position 37 in tRNAs that read codons beginning with uridine, leading to the formation of N6-(dimethylallyl)adenosine (i(6)A). The polypeptide is tRNA dimethylallyltransferase (Xanthomonas campestris pv. campestris (strain 8004)).